Reading from the N-terminus, the 510-residue chain is Lysine--tRNA ligase (510 aa).

Glu-420 and Glu-427 together coordinate Mg(2+).

Belongs to the class-II aminoacyl-tRNA synthetase family. In terms of assembly, homodimer. It depends on Mg(2+) as a cofactor.

It localises to the cytoplasm. The enzyme catalyses tRNA(Lys) + L-lysine + ATP = L-lysyl-tRNA(Lys) + AMP + diphosphate. This is Lysine--tRNA ligase (lysS) from Vibrio cholerae serotype O1 (strain ATCC 39315 / El Tor Inaba N16961).